We begin with the raw amino-acid sequence, 444 residues long: Ribitol-5-phosphate xylosyltransferase 1 (444 aa).

Over 1 to 9 (MRLTRTRLC) the chain is Cytoplasmic. Residues 10 to 30 (SLLVALYCLFSIYAAYHVFFG) traverse the membrane as a helical; Signal-anchor for type II membrane protein segment. Residues 31-444 (RRRRPLGTTS…ESSFFINNKV (414 aa)) are Extracellular-facing. The interval 38-79 (TTSRNSRKAAAAQAKERRGREQSALESEEWNPWEGDEKNEQR) is disordered. The segment covering 51–60 (AKERRGREQS) has biased composition (basic and acidic residues).

It belongs to the RXYLT1 family. As to quaternary structure, forms a complex composed of FKTN/fukutin, FKRP and RXYLT1/TMEM5.

Its subcellular location is the golgi apparatus membrane. The catalysed reaction is 3-O-[Rib-ol-P-Rib-ol-P-3-beta-D-GalNAc-(1-&gt;3)-beta-D-GlcNAc-(1-&gt;4)-(O-6-P-alpha-D-Man)]-Thr-[protein] + UDP-alpha-D-xylose = 3-O-[beta-D-Xyl-(1-&gt;4)-Rib-ol-P-Rib-ol-P-3-beta-D-GalNAc-(1-&gt;3)-beta-D-GlcNAc-(1-&gt;4)-(O-6-P-alpha-D-Man)]-Thr-[protein] + UDP + H(+). It participates in protein modification; protein glycosylation. Its function is as follows. Acts as a UDP-D-xylose:ribitol-5-phosphate beta1,4-xylosyltransferase, which catalyzes the transfer of UDP-D-xylose to ribitol 5-phosphate (Rbo5P) to form the Xylbeta1-4Rbo5P linkage on O-mannosyl glycan. Participates in the biosynthesis of the phosphorylated O-mannosyl trisaccharide (N-acetylgalactosamine-beta-3-N-acetylglucosamine-beta-4-(phosphate-6-)mannose), a carbohydrate structure present in alpha-dystroglycan (DAG1), which is required for binding laminin G-like domain-containing extracellular proteins with high affinity. The sequence is that of Ribitol-5-phosphate xylosyltransferase 1 from Mus musculus (Mouse).